The following is a 587-amino-acid chain: MKRSMYAGRVREEHIGQEITLKGWVGRRRDLGGLIFIDLRDREGIMQLVINPEKVSAEVMATAESLRSEFVIEVTGQVAAREQANDKLPTGAVELNVTALIVLNTAKTTPFEIKDGIEANDDTRLRYRYLDLRRPEMLENLKLRAKVTHSIRNYLDELEFIDVETPFLSKSTPEGARDYLVPSRVNKGHFYALPQSPQITKQLLMNAGFDRYYQIVKCFRDEDLRGDRQPEFTQVDLETSFLTEQEIQDITEGLIARVMKETKGIEVTLPFPRVKYDDAMALYGSDKPDTRFDMLLQDLTEVVKGVDFKVFSEAPAVKAIVVKGAADNYSRKDIDKMTEVAKQYGAKGLAWVKVVDGELNGPVAKFLTGIQEELTTALALEDKDLVLFVADTLEVANATLGALRGRIAKELGLIDNDKFNFLWVVDWPMFEWSEEEGRYMSAHHPFTLPQEETAHELEGDLAKVRAIAYDIVLNGYELGGGSLRINQKDLQERMFKALGFSAEEANDQFGFLLEAMDYGFPPHGGLAIGLDRFVMLLAGEENIREVIAFPKNNKATDPMTQAPSTVALKQLEELSLQVEEDETNKTN.

E174 is an L-aspartate binding site. The interval 198 to 201 is aspartate; that stretch reads QITK. L-aspartate is bound at residue R220. ATP contacts are provided by residues 220–222 and Q229; that span reads RDE. H443 contacts L-aspartate. An ATP-binding site is contributed by E477. An L-aspartate-binding site is contributed by R484. ATP is bound at residue 529–532; the sequence is GLDR.

Belongs to the class-II aminoacyl-tRNA synthetase family. Type 1 subfamily. Homodimer.

It is found in the cytoplasm. The enzyme catalyses tRNA(Asp) + L-aspartate + ATP = L-aspartyl-tRNA(Asp) + AMP + diphosphate. Its function is as follows. Catalyzes the attachment of L-aspartate to tRNA(Asp) in a two-step reaction: L-aspartate is first activated by ATP to form Asp-AMP and then transferred to the acceptor end of tRNA(Asp). The sequence is that of Aspartate--tRNA ligase from Streptococcus pneumoniae (strain 70585).